The sequence spans 264 residues: Thymidylate synthase (264 aa).

Arginine 21 is a dUMP binding site. Histidine 51 is a (6R)-5,10-methylene-5,6,7,8-tetrahydrofolate binding site. DUMP is bound at residue 126–127; sequence RR. Catalysis depends on cysteine 146, which acts as the Nucleophile. Residues 166-169, asparagine 177, and 207-209 contribute to the dUMP site; these read RSAD and HIY. Aspartate 169 is a binding site for (6R)-5,10-methylene-5,6,7,8-tetrahydrofolate. Residue alanine 263 coordinates (6R)-5,10-methylene-5,6,7,8-tetrahydrofolate.

It belongs to the thymidylate synthase family. Bacterial-type ThyA subfamily. As to quaternary structure, homodimer.

The protein resides in the cytoplasm. It carries out the reaction dUMP + (6R)-5,10-methylene-5,6,7,8-tetrahydrofolate = 7,8-dihydrofolate + dTMP. The protein operates within pyrimidine metabolism; dTTP biosynthesis. Its function is as follows. Catalyzes the reductive methylation of 2'-deoxyuridine-5'-monophosphate (dUMP) to 2'-deoxythymidine-5'-monophosphate (dTMP) while utilizing 5,10-methylenetetrahydrofolate (mTHF) as the methyl donor and reductant in the reaction, yielding dihydrofolate (DHF) as a by-product. This enzymatic reaction provides an intracellular de novo source of dTMP, an essential precursor for DNA biosynthesis. The protein is Thymidylate synthase of Brucella ovis (strain ATCC 25840 / 63/290 / NCTC 10512).